Reading from the N-terminus, the 270-residue chain is MSMQTAPIKKTTLNHLQAKKNQEKIIAITAYDALFAQIFDPLVDVILVGDSLNMSFFNQNDTLSASVEMMLYHTKAVCAGAKTPFIITDMPFGSYKDEKTALKNAIRVYKETQASAIKLEGGKEKAKLVKTLTNEGVIVVGHIGLMPQFVRLDGGYKIKGKNEEQQKKLLEDALSLEEAGVGLLVLEGITTPIAQTITQKIKIPTIGIGSGKDCDGQILVWSDMLGFFDSFKPKFVREYLKGKELVQNAIKQYADDVKKGNFPNELESYH.

Mg(2+) is bound by residues Asp50 and Asp89. 3-methyl-2-oxobutanoate-binding positions include 50–51 (DS), Asp89, and Lys118. Glu120 is a Mg(2+) binding site. The active-site Proton acceptor is the Glu187.

This sequence belongs to the PanB family. In terms of assembly, homodecamer; pentamer of dimers. Mg(2+) is required as a cofactor.

It is found in the cytoplasm. The enzyme catalyses 3-methyl-2-oxobutanoate + (6R)-5,10-methylene-5,6,7,8-tetrahydrofolate + H2O = 2-dehydropantoate + (6S)-5,6,7,8-tetrahydrofolate. It participates in cofactor biosynthesis; (R)-pantothenate biosynthesis; (R)-pantoate from 3-methyl-2-oxobutanoate: step 1/2. Its function is as follows. Catalyzes the reversible reaction in which hydroxymethyl group from 5,10-methylenetetrahydrofolate is transferred onto alpha-ketoisovalerate to form ketopantoate. This chain is 3-methyl-2-oxobutanoate hydroxymethyltransferase, found in Helicobacter pylori (strain G27).